Reading from the N-terminus, the 29-residue chain is Glucagon (29 aa).

The protein belongs to the glucagon family.

It localises to the secreted. Its function is as follows. Promotes hydrolysis of glycogen and lipids, and raises the blood sugar level. The chain is Glucagon (gcg) from Thunnus obesus (Bigeye tuna).